The following is a 293-amino-acid chain: MDTELLKTFLEVSRTRHFGRAAESLYLTQSAVSFRIRQLENQLGANLFTRHRNNIRLTPAGERLLPYAETLMSTWQLAKKEVAHSLQHTELSIGATASLWEAYLTPWLQQLYKQRETLRLEARIALRQSLVKQLHERQLDLLITTEPPKMDELASLLLGHFSLRLFSSIPFELPEKTDDGTEHKNANEAPYIKLEWGADFHQQESRLLNSEQMPVLTTTSAHLTRQLLDTTGGCAFLPEHWQKEYPELVVNADIPPIVRPLYAVWLQNSDQQTLIRQLLKTPMNNAAQSAIRD.

The region spanning 1–58 (MDTELLKTFLEVSRTRHFGRAAESLYLTQSAVSFRIRQLENQLGANLFTRHRNNIRLT) is the HTH lysR-type domain. The segment at residues 18-37 (FGRAAESLYLTQSAVSFRIR) is a DNA-binding region (H-T-H motif).

Belongs to the LysR transcriptional regulatory family.

Negatively regulates the transcription of the flagellar master operon flhDC by binding to the upstream region of the operon. This is HTH-type transcriptional regulator HdfR from Yersinia enterocolitica serotype O:8 / biotype 1B (strain NCTC 13174 / 8081).